The following is an 864-amino-acid chain: Sine oculis-binding protein homolog (864 aa).

Residues 1–14 (MAEMEKEGRPPENK) show a composition bias toward basic and acidic residues. The disordered stretch occupies residues 1–25 (MAEMEKEGRPPENKRSRKPAHPVKR). 2 consecutive FCS-type zinc fingers follow at residues 142–180 (DEVS…KCFA) and 216–256 (FKNN…KCLN). 3 disordered regions span residues 304-360 (LTDA…ETPS), 413-484 (RGPP…PGAP), and 550-616 (KPPN…RGRG). Composition is skewed to low complexity over residues 314–335 (PVAA…VSPS) and 417–433 (HHAS…MLPG). A compositionally biased stretch (pro residues) spans 460 to 484 (IHPPSTPTMPGNPPGLLPPPPPGAP). 2 stretches are compositionally biased toward low complexity: residues 565–582 (SAPG…GRSL) and 590–603 (GSSK…GSSG). Positions 618-622 (VVDLT) match the SUMO interaction motif 1 (SIM); mediates the binding to polysumoylated substrates motif. Position 627 is a phosphoserine (serine 627). Residues 648 to 652 (VIDLT) carry the SUMO interaction motif 2 (SIM); mediates the binding to polysumoylated substrates motif. Residue lysine 672 forms a Glycyl lysine isopeptide (Lys-Gly) (interchain with G-Cter in SUMO2) linkage. Phosphoserine is present on serine 694. Residues 725–750 (APAEAKGAEPPPEQPPPPAPPKKLLS) form a disordered region. Pro residues predominate over residues 733 to 745 (EPPPEQPPPPAPP).

This sequence belongs to the SOBP family. As to quaternary structure, interacts (via SIM domains) with SUMO1 and SUMO2.

In terms of biological role, implicated in development of the cochlea. This is Sine oculis-binding protein homolog from Rattus norvegicus (Rat).